We begin with the raw amino-acid sequence, 479 residues long: Flavonol 3-O-glucosyltransferase UGT71C4 (479 aa).

The active-site Proton acceptor is the H17. H17 is a binding site for an anthocyanidin. D127 serves as the catalytic Charge relay. UDP-alpha-D-glucose is bound by residues T150, A350, Q352, H367, W370, N371, S372, and E375. A390 is an an anthocyanidin binding site. UDP-alpha-D-glucose contacts are provided by E391 and Q392.

Belongs to the UDP-glycosyltransferase family.

It carries out the reaction a flavonol + UDP-alpha-D-glucose = a flavonol 3-O-beta-D-glucoside + UDP + H(+). The catalysed reaction is a 7-O-hydroxy-flavonol + UDP-alpha-D-glucose = a flavonol 7-O-beta-D-glucoside + UDP + H(+). Its function is as follows. Possesses quercetin 3-O-glucosyltransferase and 7-O-glucosyltransferase activities in vitro. Also active in vitro on benzoates and benzoate derivatives. The chain is Flavonol 3-O-glucosyltransferase UGT71C4 from Arabidopsis thaliana (Mouse-ear cress).